The chain runs to 61 residues: Small ribosomal subunit protein bS21 (61 aa).

The segment at lysine 40–phenylalanine 61 is disordered. Over residues valine 43 to phenylalanine 61 the composition is skewed to basic residues.

It belongs to the bacterial ribosomal protein bS21 family.

The sequence is that of Small ribosomal subunit protein bS21 from Ligilactobacillus salivarius (strain UCC118) (Lactobacillus salivarius).